Reading from the N-terminus, the 658-residue chain is ATP-dependent RNA helicase MRH4, mitochondrial (658 aa).

The N-terminal 32 residues, 1-32 (MLRQVTRACPFCEVRSLLGQAPRSLQPQTRLY), are a transit peptide targeting the mitochondrion. Positions 25–37 (LQPQTRLYTQVQR) are enriched in polar residues. Residues 25–150 (LQPQTRLYTQ…RNDDGKRRTR (126 aa)) are disordered. The span at 125–150 (LERERERRESHFERPKRNDDGKRRTR) shows a compositional bias: basic and acidic residues. The Q motif motif lies at 182–214 (DSFDKMPLLDTVQAAIKDALPALEYRSPTPAQS). The Helicase ATP-binding domain maps to 233 to 449 (STKKGGPEAF…ADRFPDMNRL (217 aa)). 246-253 (AETGSGKT) contacts ATP. Residues 268 to 292 (EQQEKEDAEAQAQKDADEAAAKAQD) are disordered. Residues 279 to 292 (AQKDADEAAAKAQD) show a composition bias toward basic and acidic residues. Residues 396–399 (DEAD) carry the DEAD box motif. Residues 490–658 (RSTGEYDPAE…EAMYRGEALI (169 aa)) form the Helicase C-terminal domain. Residues 552–562 (FTGSDTSTAIK) are compositionally biased toward polar residues. The interval 552–573 (FTGSDTSTAIKSSPDAPPKPEL) is disordered.

This sequence belongs to the DEAD box helicase family. MRH4 subfamily.

The protein localises to the mitochondrion. It carries out the reaction ATP + H2O = ADP + phosphate + H(+). ATP-binding RNA helicase involved in mitochondrial RNA metabolism. Required for maintenance of mitochondrial DNA. The protein is ATP-dependent RNA helicase MRH4, mitochondrial (MRH4) of Phaeosphaeria nodorum (strain SN15 / ATCC MYA-4574 / FGSC 10173) (Glume blotch fungus).